A 226-amino-acid polypeptide reads, in one-letter code: Phosphoribosylformylglycinamidine synthase subunit PurQ (226 aa).

Residues 3–226 (RVAVIRFPGT…FESLVEWCRS (224 aa)) enclose the Glutamine amidotransferase type-1 domain. The active-site Nucleophile is Cys86. Residues His199 and Glu201 contribute to the active site.

As to quaternary structure, part of the FGAM synthase complex composed of 1 PurL, 1 PurQ and 2 PurS subunits.

Its subcellular location is the cytoplasm. The enzyme catalyses N(2)-formyl-N(1)-(5-phospho-beta-D-ribosyl)glycinamide + L-glutamine + ATP + H2O = 2-formamido-N(1)-(5-O-phospho-beta-D-ribosyl)acetamidine + L-glutamate + ADP + phosphate + H(+). It carries out the reaction L-glutamine + H2O = L-glutamate + NH4(+). The protein operates within purine metabolism; IMP biosynthesis via de novo pathway; 5-amino-1-(5-phospho-D-ribosyl)imidazole from N(2)-formyl-N(1)-(5-phospho-D-ribosyl)glycinamide: step 1/2. In terms of biological role, part of the phosphoribosylformylglycinamidine synthase complex involved in the purines biosynthetic pathway. Catalyzes the ATP-dependent conversion of formylglycinamide ribonucleotide (FGAR) and glutamine to yield formylglycinamidine ribonucleotide (FGAM) and glutamate. The FGAM synthase complex is composed of three subunits. PurQ produces an ammonia molecule by converting glutamine to glutamate. PurL transfers the ammonia molecule to FGAR to form FGAM in an ATP-dependent manner. PurS interacts with PurQ and PurL and is thought to assist in the transfer of the ammonia molecule from PurQ to PurL. The protein is Phosphoribosylformylglycinamidine synthase subunit PurQ of Methanopyrus kandleri (strain AV19 / DSM 6324 / JCM 9639 / NBRC 100938).